A 165-amino-acid polypeptide reads, in one-letter code: Neurotrophin-3 (165 aa).

Residues 1–3 (IQS) form the signal peptide. A propeptide spanning residues 4-119 (TSMDQGSLSE…VLNQTSRRKR (116 aa)) is cleaved from the precursor. An N-linked (GlcNAc...) asparagine glycan is attached at Asn112.

Belongs to the NGF-beta family.

It localises to the secreted. Its function is as follows. Seems to promote the survival of visceral and proprioceptive sensory neurons. This chain is Neurotrophin-3 (NTF3), found in Aspidites melanocephalus (Black-headed python).